The chain runs to 215 residues: Leucyl/phenylalanyl-tRNA--protein transferase (215 aa).

The protein belongs to the L/F-transferase family.

Its subcellular location is the cytoplasm. It carries out the reaction N-terminal L-lysyl-[protein] + L-leucyl-tRNA(Leu) = N-terminal L-leucyl-L-lysyl-[protein] + tRNA(Leu) + H(+). The enzyme catalyses N-terminal L-arginyl-[protein] + L-leucyl-tRNA(Leu) = N-terminal L-leucyl-L-arginyl-[protein] + tRNA(Leu) + H(+). It catalyses the reaction L-phenylalanyl-tRNA(Phe) + an N-terminal L-alpha-aminoacyl-[protein] = an N-terminal L-phenylalanyl-L-alpha-aminoacyl-[protein] + tRNA(Phe). Functions in the N-end rule pathway of protein degradation where it conjugates Leu, Phe and, less efficiently, Met from aminoacyl-tRNAs to the N-termini of proteins containing an N-terminal arginine or lysine. The polypeptide is Leucyl/phenylalanyl-tRNA--protein transferase (Campylobacter jejuni subsp. doylei (strain ATCC BAA-1458 / RM4099 / 269.97)).